Consider the following 369-residue polypeptide: Endophilin-A (369 aa).

The BAR domain maps to 18–248 (TEKMGGAEGT…LQEKRSEAES (231 aa)). Residues 227–247 (QCADVLRGLQETLQEKRSEAE) adopt a coiled-coil conformation. A compositionally biased stretch (low complexity) spans 275 to 294 (GTPSHISSSASPLPSPMRSP). The tract at residues 275 to 296 (GTPSHISSSASPLPSPMRSPAK) is disordered. Residues 305–364 (QQQPCCQALYDFDPENPGELGFKENDIITLLNRVDDNWYEGAVNGRTGYFPQSYVQVQVP) enclose the SH3 domain.

This sequence belongs to the endophilin family.

The protein resides in the cytoplasm. It is found in the membrane. Functionally, required presynaptically at the neuromuscular junction. Implicated in synaptic vesicle endocytosis. The sequence is that of Endophilin-A from Drosophila pseudoobscura pseudoobscura (Fruit fly).